Reading from the N-terminus, the 331-residue chain is Ketol-acid reductoisomerase (NADP(+)) (331 aa).

The KARI N-terminal Rossmann domain maps to 2 to 182; it reads AQLFYDSDAD…GGTRAGILET (181 aa). Residues 25-28, Ser-51, Ser-53, and 83-86 contribute to the NADP(+) site; these read YGSQ and DEFQ. His-108 is a catalytic residue. An NADP(+)-binding site is contributed by Gly-134. Positions 183 to 328 constitute a KARI C-terminal knotted domain; it reads NFKEETETDL…KGLRSMFSWL (146 aa). Mg(2+) contacts are provided by Asp-191, Glu-195, Glu-227, and Glu-231. Ser-252 lines the substrate pocket.

It belongs to the ketol-acid reductoisomerase family. Mg(2+) is required as a cofactor.

It carries out the reaction (2R)-2,3-dihydroxy-3-methylbutanoate + NADP(+) = (2S)-2-acetolactate + NADPH + H(+). It catalyses the reaction (2R,3R)-2,3-dihydroxy-3-methylpentanoate + NADP(+) = (S)-2-ethyl-2-hydroxy-3-oxobutanoate + NADPH + H(+). The protein operates within amino-acid biosynthesis; L-isoleucine biosynthesis; L-isoleucine from 2-oxobutanoate: step 2/4. It functions in the pathway amino-acid biosynthesis; L-valine biosynthesis; L-valine from pyruvate: step 2/4. Involved in the biosynthesis of branched-chain amino acids (BCAA). Catalyzes an alkyl-migration followed by a ketol-acid reduction of (S)-2-acetolactate (S2AL) to yield (R)-2,3-dihydroxy-isovalerate. In the isomerase reaction, S2AL is rearranged via a Mg-dependent methyl migration to produce 3-hydroxy-3-methyl-2-ketobutyrate (HMKB). In the reductase reaction, this 2-ketoacid undergoes a metal-dependent reduction by NADPH to yield (R)-2,3-dihydroxy-isovalerate. This is Ketol-acid reductoisomerase (NADP(+)) from Parasynechococcus marenigrum (strain WH8102).